The primary structure comprises 709 residues: Glycerol kinase (709 aa).

Substrate is bound at residue Thr56. Arg60 serves as a coordination point for ATP. The interval 86–110 (KIGVSGLRRPSTAPARETPNAGDIK) is disordered. Arg201, Tyr258, and Asp386 together coordinate substrate. ATP-binding positions include Thr408, Gly463, and 584 to 588 (GMSRS).

This sequence belongs to the FGGY kinase family.

The enzyme catalyses glycerol + ATP = sn-glycerol 3-phosphate + ADP + H(+). It participates in polyol metabolism; glycerol degradation via glycerol kinase pathway; sn-glycerol 3-phosphate from glycerol: step 1/1. Its function is as follows. Key enzyme in the regulation of glycerol uptake and metabolism. Catalyzes the phosphorylation of glycerol to yield sn-glycerol 3-phosphate. The protein is Glycerol kinase (GUT1) of Saccharomyces cerevisiae (strain ATCC 204508 / S288c) (Baker's yeast).